Reading from the N-terminus, the 189-residue chain is Ras-like protein 1 (189 aa).

10–17 (GAGGVGKS) serves as a coordination point for GTP. The short motif at 32–40 (YDPTIEDSY) is the Effector region element. GTP is bound by residues 57–61 (DTAGQ) and 116–119 (NKCD). Cys186 carries the cysteine methyl ester modification. Residue Cys186 is the site of S-geranylgeranyl cysteine attachment. The propeptide at 187 to 189 (KML) is removed in mature form.

The protein belongs to the small GTPase superfamily. Ras family.

It localises to the cell membrane. The enzyme catalyses GTP + H2O = GDP + phosphate + H(+). With respect to regulation, alternates between an inactive form bound to GDP and an active form bound to GTP. Activated by a guanine nucleotide-exchange factor (GEF) and inactivated by a GTPase-activating protein (GAP). Its function is as follows. Ras proteins bind GDP/GTP and possess intrinsic GTPase activity. Plays a role in eye development by regulating cell growth, survival of postmitotic ommatidial cells and differentiation of photoreceptor cells. During larval development, mediates Ptth/tor signaling leading to the production of ecdysone, a hormone required for the initiation of metamorphosis. This is Ras-like protein 1 from Drosophila grimshawi (Hawaiian fruit fly).